The following is a 457-amino-acid chain: tRNA modification GTPase MnmE (457 aa).

Residues Arg-22, Glu-85, and Arg-124 each coordinate (6S)-5-formyl-5,6,7,8-tetrahydrofolate. The TrmE-type G domain occupies 219-378 (GATVVIAGKP…LKEKIYDLVL (160 aa)). Asn-229 contributes to the K(+) binding site. GTP is bound by residues 229–234 (NTGKSS), 248–254 (TPVPGTT), 273–276 (DTAG), and 333–336 (NKAD). Ser-233 provides a ligand contact to Mg(2+). K(+) is bound by residues Thr-248, Val-250, and Thr-253. Thr-254 contacts Mg(2+). Lys-457 serves as a coordination point for (6S)-5-formyl-5,6,7,8-tetrahydrofolate.

It belongs to the TRAFAC class TrmE-Era-EngA-EngB-Septin-like GTPase superfamily. TrmE GTPase family. In terms of assembly, homodimer. Heterotetramer of two MnmE and two MnmG subunits. Requires K(+) as cofactor.

Its subcellular location is the cytoplasm. Its function is as follows. Exhibits a very high intrinsic GTPase hydrolysis rate. Involved in the addition of a carboxymethylaminomethyl (cmnm) group at the wobble position (U34) of certain tRNAs, forming tRNA-cmnm(5)s(2)U34. This chain is tRNA modification GTPase MnmE, found in Syntrophus aciditrophicus (strain SB).